The chain runs to 209 residues: MGKVVVMDHPLIQHKIGIMRRTDTGSKDFRTLVSEVAMLECYEATRDLELTDVEIETPICKATVKELKGKKLAVVPILRAGLGMVEGMLELIPAAKVGHIGMYRDPETAEPIEYYCKLPADCANREVFVVDPMLATGGSAVAALDMLKKRGVKNIHFMCIIAAPEGVKRLTEAHPDVDVYIGALDDHLNEHKYIVPGLGDAGDRIFGTK.

Residues Arg79, Arg104, and 131–139 (DPMLATGGS) each bind 5-phospho-alpha-D-ribose 1-diphosphate. Uracil contacts are provided by residues Ile194 and 199-201 (GDA). Asp200 serves as a coordination point for 5-phospho-alpha-D-ribose 1-diphosphate.

It belongs to the UPRTase family. The cofactor is Mg(2+).

It carries out the reaction UMP + diphosphate = 5-phospho-alpha-D-ribose 1-diphosphate + uracil. It participates in pyrimidine metabolism; UMP biosynthesis via salvage pathway; UMP from uracil: step 1/1. Allosterically activated by GTP. In terms of biological role, catalyzes the conversion of uracil and 5-phospho-alpha-D-ribose 1-diphosphate (PRPP) to UMP and diphosphate. The sequence is that of Uracil phosphoribosyltransferase from Agathobacter rectalis (strain ATCC 33656 / DSM 3377 / JCM 17463 / KCTC 5835 / VPI 0990) (Eubacterium rectale).